The primary structure comprises 950 residues: Voltage-gated inwardly rectifying potassium channel KCNH6 (950 aa).

Over 1–261 (MPVRRGHVAP…YSPFKAVWDW (261 aa)) the chain is Cytoplasmic. A PAS domain is found at 41–70 (IIYCNDGFCELFGYSRVEVMQRPCTCDFLT). In terms of domain architecture, PAC spans 92–144 (CKVDILYYRKDASSFRCLVDVVPVKNEDGAVIMFILNFEDLAQLLAKSSSRSL). A disordered region spans residues 154–174 (LGSEGSHSRPSGQGPGPGRGK). Residues 262-282 (LILLLVIYTAVFTPYSAAFLL) traverse the membrane as a helical segment. Over 283-298 (SDQDESQRGTCGYTCS) the chain is Extracellular. Residues 299–319 (PLTVVDLIVDIMFVVDIVINF) form a helical membrane-spanning segment. Residues 320-340 (RTTYVNTNDEVVSHPRRIAVH) are Cytoplasmic-facing. The chain crosses the membrane as a helical span at residues 341–361 (YFKGWFLIDMVAAIPFDLLIF). Over 362-370 (RTGSDETTT) the chain is Extracellular. The chain crosses the membrane as a helical; Voltage-sensor span at residues 371 to 391 (LIGLLKTARLLRLVRVARKLD). Residues 392–398 (RYSEYGA) are Cytoplasmic-facing. Residues 399 to 419 (AVLFLLMCTFALIAHWLACIW) form a helical membrane-spanning segment. Over 420–463 (YAIGNVERPYLEPKIGWLDSLGAQLGKQYNGSDPASGPSVQDKY) the chain is Extracellular. Residues 464 to 484 (VTALYFTFSSLTSVGFGNVSP) constitute an intramembrane region (pore-forming). The Selectivity filter signature appears at 476 to 481 (SVGFGN). Over 485–490 (NTNSEK) the chain is Extracellular. A helical transmembrane segment spans residues 491–511 (VFSICVMLIGSLMYASIFGNV). Residues 512-950 (SAIIQRLYSG…HGSDPGFTRS (439 aa)) are Cytoplasmic-facing. The tract at residues 594-694 (AFRGASKGCL…IHRADLLEVL (101 aa)) is cNMP-binding domain. 2 disordered regions span residues 719–750 (GGLQ…APSL) and 890–950 (VPSS…FTRS). A compositionally biased stretch (polar residues) spans 740–750 (NDSQSGAAPSL). Residues 898 to 912 (PGGLLSPLASPLRPL) show a composition bias toward low complexity.

It belongs to the potassium channel family. H (Eag) (TC 1.A.1.20) subfamily. Kv11.2/KCNH6 sub-subfamily. The potassium channel is probably composed of a homo- or heterotetrameric complex of pore-forming alpha subunits that can associate only within their subfamily. In terms of tissue distribution, highly expressed in celiac and superior mesenteric ganglia, but not detected in brain or in heart. Detected at low levels in retina. Also found in pituitary. Also found in the olfactory bulb (granular and mitral cell layers).

It localises to the cell membrane. It carries out the reaction K(+)(in) = K(+)(out). Pore-forming (alpha) subunit of voltage-gated inwardly rectifying potassium channel. Characterized by unusual gating kinetics by producing relatively small outward currents during membrane depolarization and large inward currents during subsequent repolarization which reflect a rapid inactivation during depolarization and quick recovery from inactivation but slow deactivation (closing) during repolarization. Activates even more slowly than KCNH2. The sequence is that of Voltage-gated inwardly rectifying potassium channel KCNH6 from Rattus norvegicus (Rat).